We begin with the raw amino-acid sequence, 373 residues long: 3 beta-hydroxysteroid dehydrogenase/Delta 5--&gt;4-isomerase type 1 (373 aa).

Residues 10–15 (GAGGFL), tyrosine 155, and lysine 159 contribute to the NADP(+) site. Residue lysine 159 is the Proton donor of the active site. A helical transmembrane segment spans residues 288–308 (LALMYWIGFLLEVVSFLLSPV).

The protein belongs to the 3-beta-HSD family. Adrenal glands, testes and ovaries.

It is found in the endoplasmic reticulum membrane. It localises to the mitochondrion membrane. It carries out the reaction a 3beta-hydroxy-Delta(5)-steroid + NAD(+) = a 3-oxo-Delta(5)-steroid + NADH + H(+). The catalysed reaction is pregnenolone + NAD(+) = pregn-5-ene-3,20-dione + NADH + H(+). It catalyses the reaction 3beta-hydroxyandrost-5-en-17-one + NAD(+) = androst-5-ene-3,17-dione + NADH + H(+). The enzyme catalyses androst-5-en-3beta,17beta-diol + NAD(+) = 17beta-hydroxy-androst-5-en-3-one + NADH + H(+). It carries out the reaction a 3beta-hydroxysteroid + NADP(+) = a 3-oxosteroid + NADPH + H(+). The catalysed reaction is 5alpha-androstane-3beta,17beta-diol + NADP(+) = 17beta-hydroxy-5alpha-androstan-3-one + NADPH + H(+). It catalyses the reaction 3beta-hydroxy-5alpha-androstan-17-one + NADP(+) = 5alpha-androstan-3,17-dione + NADPH + H(+). The enzyme catalyses a 3-oxo-Delta(5)-steroid = a 3-oxo-Delta(4)-steroid. It carries out the reaction pregn-5-ene-3,20-dione = progesterone. The catalysed reaction is androst-5-ene-3,17-dione = androst-4-ene-3,17-dione. It catalyses the reaction 17beta-hydroxy-androst-5-en-3-one = testosterone. The enzyme catalyses 5alpha-androstane-3beta,17beta-diol + NAD(+) = 17beta-hydroxy-5alpha-androstan-3-one + NADH + H(+). It functions in the pathway steroid hormone biosynthesis. Its pathway is steroid metabolism. In terms of biological role, a bifunctional enzyme responsible for the oxidation and isomerization of 3beta-hydroxy-Delta(5)-steroid precursors to 3-oxo-Delta(4)-steroids, an essential step in steroid hormone biosynthesis. Specifically catalyzes the conversion of pregnenolone to progesterone, 17alpha-hydroxypregnenolone to 17alpha-hydroxyprogesterone, dehydroepiandrosterone (DHEA) to 4-androstenedione and androstenediol to testosterone. Additionally, catalyzes the interconversion between 3beta-hydroxy and 3-oxo-5alpha-androstane steroids controlling the bioavalability of the active forms. Specifically converts dihydrotestosterone to its inactive form 5alpha-androstanediol, that does not bind androgen receptor/AR. Also converts androstanedione, a precursor of testosterone and estrone, to epiandrosterone. Expected to use NAD(+) as preferred electron donor for the 3beta-hydroxy-steroid dehydrogenase activity and NADPH for the 3-ketosteroid reductase activity. This chain is 3 beta-hydroxysteroid dehydrogenase/Delta 5--&gt;4-isomerase type 1 (HSD3B1), found in Macaca mulatta (Rhesus macaque).